A 405-amino-acid polypeptide reads, in one-letter code: ATP-sensitive inward rectifier potassium channel 15 (405 aa).

The Cytoplasmic segment spans residues 1–90 (MVARWVKGSE…LQDLWTTVID (90 aa)). The chain crosses the membrane as a helical span at residues 91-117 (MKWRYKLTLFAATFVMTWFLFGVVYYA). Over 118–143 (IAFIHGDLELGESNSNHTPCIMKVDS) the chain is Extracellular. The segment at residues 144–160 (LTGAFLFSLESQTTIGY) is an intramembrane region (helical; Pore-forming). The short motif at 157–162 (TIGYGV) is the Selectivity filter element. Residues 161–169 (GVRSITEEC) lie on the Extracellular side of the membrane. Residues 170–195 (PHAIFLLVAQLVITTLIEIFITGTFL) traverse the membrane as a helical segment. The Cytoplasmic portion of the chain corresponds to 196-405 (AKIARPKKRA…RSLLLQQSNV (210 aa)).

It belongs to the inward rectifier-type potassium channel (TC 1.A.2.1) family. KCNJ15 subfamily. Can form heteromultimeric channels with Kir5.1/KCNJ16. Interacts with PATJ.

It localises to the membrane. The protein resides in the cell membrane. It catalyses the reaction K(+)(in) = K(+)(out). Channel activity is regulated by variations of cytosolic pH; reversibly inhibited by acidic pH values. Inhibited by Ba(2+) and Cs(+) in a voltage-dependent manner. Inward rectifier potassium channels are characterized by a greater tendency to allow potassium to flow into the cell rather than out of it. Their voltage dependence is regulated by the concentration of extracellular potassium; as external potassium is raised, the voltage range of the channel opening shifts to more positive voltages. The inward rectification is mainly due to the blockage of outward current by internal magnesium. The chain is ATP-sensitive inward rectifier potassium channel 15 (Kcnj15) from Rattus norvegicus (Rat).